Reading from the N-terminus, the 224-residue chain is RNA-binding protein 24-B (224 aa).

An RRM domain is found at 11–88 (TKIFVGGLPY…RKANVNLAYL (78 aa)).

It localises to the nucleus. The protein resides in the cytoplasm. Its function is as follows. Multifunctional RNA-binding protein involved in the regulation of pre-mRNA splicing, mRNA stability and mRNA translation important for cell fate decision and differentiation. Plays a major role in pre-mRNA alternative splicing regulation. Mediates preferentially muscle-specific exon inclusion in numerous mRNAs important for striated cardiac and skeletal muscle cell differentiation. Binds to intronic splicing enhancer (ISE) composed of stretches of GU-rich motifs localized in flanking intron of exon that will be included by alternative splicing. Involved in embryonic stem cell (ESC) transition to cardiac cell differentiation by promoting pre-mRNA alternative splicing events of several pluripotency and/or differentiation genes. Plays a role in the regulation of mRNA stability and mRNA translation to which it is bound. Involved in myogenic differentiation by regulating myog levels. Binds to a huge amount of mRNAs. Required for embryonic heart development, sarcomer and M-band formation in striated muscles. This is RNA-binding protein 24-B (rbm24-b) from Xenopus laevis (African clawed frog).